The sequence spans 69 residues: Conotoxin Eb6.19 (69 aa).

An N-terminal signal peptide occupies residues 1 to 17 (VLIIAVLFLTACQLTTA). Residues 18 to 41 (ETYSRGRQKHRARRSTDKNSKWTR) constitute a propeptide that is removed on maturation. 3 cysteine pairs are disulfide-bonded: C43–C57, C50–C61, and C56–C68.

It belongs to the conotoxin O1 superfamily. As to expression, expressed by the venom duct.

The protein localises to the secreted. The chain is Conotoxin Eb6.19 (E1) from Conus ebraeus (Hebrew cone).